An 89-amino-acid chain; its full sequence is Small ribosomal subunit protein uS15 (89 aa).

The protein belongs to the universal ribosomal protein uS15 family. Part of the 30S ribosomal subunit. Forms a bridge to the 50S subunit in the 70S ribosome, contacting the 23S rRNA.

Its function is as follows. One of the primary rRNA binding proteins, it binds directly to 16S rRNA where it helps nucleate assembly of the platform of the 30S subunit by binding and bridging several RNA helices of the 16S rRNA. Functionally, forms an intersubunit bridge (bridge B4) with the 23S rRNA of the 50S subunit in the ribosome. The protein is Small ribosomal subunit protein uS15 of Desulforapulum autotrophicum (strain ATCC 43914 / DSM 3382 / VKM B-1955 / HRM2) (Desulfobacterium autotrophicum).